Reading from the N-terminus, the 305-residue chain is Aspartate carbamoyltransferase catalytic subunit (305 aa).

Carbamoyl phosphate-binding residues include arginine 52 and threonine 53. Lysine 80 contacts L-aspartate. Carbamoyl phosphate is bound by residues arginine 102, histidine 132, and glutamine 135. L-aspartate is bound by residues arginine 165 and arginine 217. Carbamoyl phosphate is bound by residues alanine 258 and proline 259.

This sequence belongs to the aspartate/ornithine carbamoyltransferase superfamily. ATCase family. Heterododecamer (2C3:3R2) of six catalytic PyrB chains organized as two trimers (C3), and six regulatory PyrI chains organized as three dimers (R2).

It carries out the reaction carbamoyl phosphate + L-aspartate = N-carbamoyl-L-aspartate + phosphate + H(+). The protein operates within pyrimidine metabolism; UMP biosynthesis via de novo pathway; (S)-dihydroorotate from bicarbonate: step 2/3. Its function is as follows. Catalyzes the condensation of carbamoyl phosphate and aspartate to form carbamoyl aspartate and inorganic phosphate, the committed step in the de novo pyrimidine nucleotide biosynthesis pathway. The sequence is that of Aspartate carbamoyltransferase catalytic subunit from Latilactobacillus sakei subsp. sakei (strain 23K) (Lactobacillus sakei subsp. sakei).